The following is a 496-amino-acid chain: Apolipoprotein N-acyltransferase (496 aa).

6 helical membrane passes run 23–43 (GIAT…FILW), 50–70 (LANF…LYEL), 84–104 (LIIS…LVYL), 126–146 (LTIK…ILSQ), 171–191 (WIGA…IYLI), and 205–225 (FLFG…TNPI). One can recognise a CN hydrolase domain in the interval 236–464 (WQTNMPTREK…NDVVNPNFSI (229 aa)). Glu276 serves as the catalytic Proton acceptor. Lys325 is an active-site residue. Catalysis depends on Cys374, which acts as the Nucleophile. Residues 476 to 496 (PLFLLCLFLIGLNLYFGKFTN) traverse the membrane as a helical segment.

Belongs to the CN hydrolase family. Apolipoprotein N-acyltransferase subfamily.

The protein localises to the cell inner membrane. It catalyses the reaction N-terminal S-1,2-diacyl-sn-glyceryl-L-cysteinyl-[lipoprotein] + a glycerophospholipid = N-acyl-S-1,2-diacyl-sn-glyceryl-L-cysteinyl-[lipoprotein] + a 2-acyl-sn-glycero-3-phospholipid + H(+). Its pathway is protein modification; lipoprotein biosynthesis (N-acyl transfer). Functionally, catalyzes the phospholipid dependent N-acylation of the N-terminal cysteine of apolipoprotein, the last step in lipoprotein maturation. In Prochlorococcus marinus subsp. pastoris (strain CCMP1986 / NIES-2087 / MED4), this protein is Apolipoprotein N-acyltransferase.